A 273-amino-acid polypeptide reads, in one-letter code: Shikimate dehydrogenase (NADP(+)) (273 aa).

Shikimate-binding positions include S14–S16 and T61. K65 serves as the catalytic Proton acceptor. D77 provides a ligand contact to NADP(+). 2 residues coordinate shikimate: N86 and D102. NADP(+) is bound by residues G127–A131, N151–R156, and M215. Y217 provides a ligand contact to shikimate. G239 serves as a coordination point for NADP(+).

This sequence belongs to the shikimate dehydrogenase family. Homodimer.

It catalyses the reaction shikimate + NADP(+) = 3-dehydroshikimate + NADPH + H(+). Its pathway is metabolic intermediate biosynthesis; chorismate biosynthesis; chorismate from D-erythrose 4-phosphate and phosphoenolpyruvate: step 4/7. Its function is as follows. Involved in the biosynthesis of the chorismate, which leads to the biosynthesis of aromatic amino acids. Catalyzes the reversible NADPH linked reduction of 3-dehydroshikimate (DHSA) to yield shikimate (SA). This Thioalkalivibrio sulfidiphilus (strain HL-EbGR7) protein is Shikimate dehydrogenase (NADP(+)).